We begin with the raw amino-acid sequence, 768 residues long: MLDINEMENKWKDYWFNNDVFKFRPGNKIFIIDTPPPTVSGKMHMGHAYSYPHQDFMARYMRMKGFSVYYPWGFDDNGLPTERYVEKERHVTIRNTPLDEYIKICREASRDAEKILLKNWYDLGLSCDFKNYIETSSDFSTRISQELFIDLVLNNRAYRAEAPVIRCPTCNTAISQIDMKDTEIDTDLVYINFSGIEIATTRPELLGACVALVVNPNDPRYKKIINSEVVVPLYNYTVRIISDDSIDMNFGTGAEMLCTFGDQHDLELWRKYNPGTRIIIKNDLIDDGIIIKGLSVKEARKEIIKKLKENNYLIKTERIKHSVNTHERCGTPVEIIISKQWYIKDLDIKDELLDLGNRIEWIPDYMKTRYQNWVSGLKWDWCISRQRYYGIPFPVWYCKDCGGIVLADKSELPVDPRLSGTNKRCSCGSGNLEPETDVMDTWATSSISVTLYLMHINSMNLYPADVRFQGHDIITSWAFTTILRSYLHYRDVPWKKIFISGNVYDPYGEKMSKSKGNIIEPSTIIEKYGADALRFWASTTMPGENIKIREQDLVRGRKTVIKLYNSARLVLMLSDNIKGSMDNIISQVNRWILTKFEKTLKNVTELMDGYYFSRARSELDNFFWNIFCDNYLEIIKSEIKRYPEETAAVSRFLMENIIKMYSPIMPFITEELYHEFNKDSLSVSLEKYPEYNEDYIFDGAEDFDYIIDIINKIRAIKSNMKMSMAAPISISLKGNEKIINDSAEIIKSVMHVENLKISNSDNIEIEVQ.

The short motif at 37–47 is the 'HIGH' region element; that stretch reads PTVSGKMHMGH. A 'KMSKS' region motif is present at residues 510 to 514; it reads KMSKS. Lysine 513 serves as a coordination point for ATP.

Belongs to the class-I aminoacyl-tRNA synthetase family. ValS type 2 subfamily.

The protein resides in the cytoplasm. It catalyses the reaction tRNA(Val) + L-valine + ATP = L-valyl-tRNA(Val) + AMP + diphosphate. In terms of biological role, catalyzes the attachment of valine to tRNA(Val). As ValRS can inadvertently accommodate and process structurally similar amino acids such as threonine, to avoid such errors, it has a 'posttransfer' editing activity that hydrolyzes mischarged Thr-tRNA(Val) in a tRNA-dependent manner. The protein is Valine--tRNA ligase of Picrophilus torridus (strain ATCC 700027 / DSM 9790 / JCM 10055 / NBRC 100828 / KAW 2/3).